We begin with the raw amino-acid sequence, 359 residues long: DNA polymerase IV (359 aa).

Residues 4–185 (IIHIDMDCYF…LSLRKIPGVG (182 aa)) enclose the UmuC domain. Residues aspartate 8 and aspartate 103 each contribute to the Mg(2+) site. Glutamate 104 is a catalytic residue.

Belongs to the DNA polymerase type-Y family. As to quaternary structure, monomer. Mg(2+) serves as cofactor.

It is found in the cytoplasm. It carries out the reaction DNA(n) + a 2'-deoxyribonucleoside 5'-triphosphate = DNA(n+1) + diphosphate. Functionally, poorly processive, error-prone DNA polymerase involved in untargeted mutagenesis. Copies undamaged DNA at stalled replication forks, which arise in vivo from mismatched or misaligned primer ends. These misaligned primers can be extended by PolIV. Exhibits no 3'-5' exonuclease (proofreading) activity. May be involved in translesional synthesis, in conjunction with the beta clamp from PolIII. The chain is DNA polymerase IV from Shewanella sp. (strain MR-7).